The sequence spans 331 residues: Cytoplasmic envelopment protein 1 (331 aa).

It belongs to the herpesviridae cytoplasmic envelopment protein 1 family. In terms of assembly, interacts with protein ORF7; this interaction localizes protein ORF53 to the host trans-Golgi network (TGN).

It is found in the virion. Its subcellular location is the virion tegument. The protein resides in the host cytoplasm. The protein localises to the host Golgi apparatus. Its function is as follows. Plays a critical role in cytoplasmic virus egress. Participates in the final step of tegumentation and envelope acquisition within the host cytoplasm. This Varicella-zoster virus (strain Dumas) (HHV-3) protein is Cytoplasmic envelopment protein 1 (ORF53).